The sequence spans 447 residues: Transcription factor azf1 (447 aa).

Disordered stretches follow at residues 125-155 (HNGASQQPPGAQSSSNEEGAQGKSSSSNEVE) and 174-199 (QSPGVQSLPPLQQLTHGGSNGYPQSY). Low complexity predominate over residues 127-139 (GASQQPPGAQSSS). Polar residues predominate over residues 140–155 (NEEGAQGKSSSSNEVE). 4 C2H2-type zinc fingers span residues 225–249 (YACTLPQCGKSFAQKTHLDIHMRAH), 255–279 (FVCKEPSCGQRFSQLGNLKTHQRRH), 285–307 (FSCDICQKRFAQRGNVRAHKITH), and 313–338 (FTCLLDDCGKQFTQLGNLKSHQNKFH). A disordered region spans residues 377 to 447 (NKGIKGRGKD…EPYFIERQAH (71 aa)). The span at 397–416 (PGSESRRRIEPLSSTDDKMR) shows a compositional bias: basic and acidic residues. The span at 421–431 (GDTSMYNGGSS) shows a compositional bias: polar residues.

Its subcellular location is the nucleus. Functionally, transcription factor that acts as a positive regulator of ochratoxin A (OTA) biosynthesis via controlling the expression of antioxidant genes and oxidative phosphorylation genes. The chain is Transcription factor azf1 from Aspergillus niger (strain ATCC MYA-4892 / CBS 513.88 / FGSC A1513).